A 302-amino-acid polypeptide reads, in one-letter code: Trans-4-hydroxy-L-proline dehydratase activating enzyme (302 aa).

Residues 14–297 (HDGPGIRSTV…KRLFEASNFN (284 aa)) form the Radical SAM core domain. Residues Cys28, Cys32, Cys35, Cys54, Cys57, Cys60, and Cys93 each contribute to the [4Fe-4S] cluster site. Position 34 to 36 (34 to 36 (WCH)) interacts with S-adenosyl-L-methionine. 2 4Fe-4S ferredoxin-type domains span residues 45–74 (KQVLYNEERCSKCEACINICPHKAIYKGET) and 75–103 (KICLDQDKCEFCETCLDYCVNNAREIVGQ). Residues Gly133, 183–185 (DIK), and His257 contribute to the S-adenosyl-L-methionine site.

Belongs to the organic radical-activating enzymes family. The cofactor is [4Fe-4S] cluster.

The enzyme catalyses glycyl-[protein] + reduced [flavodoxin] + S-adenosyl-L-methionine = glycin-2-yl radical-[protein] + semiquinone [flavodoxin] + 5'-deoxyadenosine + L-methionine + H(+). Catalyzes activation of the trans-4-hydroxy-L-proline dehydratase under anaerobic conditions by generation of an organic free radical on a glycine residue, via a homolytic cleavage of S-adenosyl-L-methionine (SAM). Is involved in the anaerobic degradation of 4-hydroxyproline. In Clostridioides difficile (Peptoclostridium difficile), this protein is Trans-4-hydroxy-L-proline dehydratase activating enzyme.